Consider the following 388-residue polypeptide: Protein-glutamate methylesterase/protein-glutamine glutaminase 1 (388 aa).

The 118-residue stretch at 4 to 121 (QVLVVDDSSF…ATNKDEAIRL (118 aa)) folds into the Response regulatory domain. Asp55 carries the post-translational modification 4-aspartylphosphate. The tract at residues 149–190 (SARAGLSSTSPTLGSSTLGRSPASGLASSASRNSPTVSTPAS) is disordered. The span at 153-169 (GLSSTSPTLGSSTLGRS) shows a compositional bias: low complexity. A compositionally biased stretch (polar residues) spans 174–189 (LASSASRNSPTVSTPA). Positions 188–388 (PASAIRASGK…EAILKESGRG (201 aa)) constitute a CheB-type methylesterase domain. Active-site residues include Ser207, His234, and Asp330.

It belongs to the CheB family. Phosphorylated by CheA. Phosphorylation of the N-terminal regulatory domain activates the methylesterase activity.

The protein resides in the cytoplasm. The enzyme catalyses [protein]-L-glutamate 5-O-methyl ester + H2O = L-glutamyl-[protein] + methanol + H(+). It catalyses the reaction L-glutaminyl-[protein] + H2O = L-glutamyl-[protein] + NH4(+). Its function is as follows. Involved in chemotaxis. Part of a chemotaxis signal transduction system that modulates chemotaxis in response to various stimuli. Catalyzes the demethylation of specific methylglutamate residues introduced into the chemoreceptors (methyl-accepting chemotaxis proteins or MCP) by CheR. Also mediates the irreversible deamidation of specific glutamine residues to glutamic acid. The chain is Protein-glutamate methylesterase/protein-glutamine glutaminase 1 from Shewanella denitrificans (strain OS217 / ATCC BAA-1090 / DSM 15013).